The sequence spans 268 residues: 4-hydroxy-tetrahydrodipicolinate reductase (268 aa).

Residues 8-13 (GACGKM), aspartate 34, 95-97 (GTT), and 121-124 (APNF) contribute to the NAD(+) site. The Proton donor/acceptor role is filled by histidine 151. Histidine 152 serves as a coordination point for (S)-2,3,4,5-tetrahydrodipicolinate. The active-site Proton donor is the lysine 155. (S)-2,3,4,5-tetrahydrodipicolinate is bound at residue 161–162 (GT).

The protein belongs to the DapB family.

Its subcellular location is the cytoplasm. It carries out the reaction (S)-2,3,4,5-tetrahydrodipicolinate + NAD(+) + H2O = (2S,4S)-4-hydroxy-2,3,4,5-tetrahydrodipicolinate + NADH + H(+). It catalyses the reaction (S)-2,3,4,5-tetrahydrodipicolinate + NADP(+) + H2O = (2S,4S)-4-hydroxy-2,3,4,5-tetrahydrodipicolinate + NADPH + H(+). It functions in the pathway amino-acid biosynthesis; L-lysine biosynthesis via DAP pathway; (S)-tetrahydrodipicolinate from L-aspartate: step 4/4. In terms of biological role, catalyzes the conversion of 4-hydroxy-tetrahydrodipicolinate (HTPA) to tetrahydrodipicolinate. The protein is 4-hydroxy-tetrahydrodipicolinate reductase of Dictyoglomus turgidum (strain DSM 6724 / Z-1310).